A 120-amino-acid chain; its full sequence is Chaperonin GroEL (120 aa).

23–27 (DGTTT) lines the ATP pocket.

This sequence belongs to the chaperonin (HSP60) family. As to quaternary structure, forms a cylinder of 14 subunits composed of two heptameric rings stacked back-to-back. Interacts with the co-chaperonin GroES.

It is found in the cytoplasm. It catalyses the reaction ATP + H2O + a folded polypeptide = ADP + phosphate + an unfolded polypeptide.. Functionally, together with its co-chaperonin GroES, plays an essential role in assisting protein folding. The GroEL-GroES system forms a nano-cage that allows encapsulation of the non-native substrate proteins and provides a physical environment optimized to promote and accelerate protein folding. This Mycobacterium xenopi protein is Chaperonin GroEL.